Reading from the N-terminus, the 738-residue chain is Flowering time control protein FCA (738 aa).

Positions 1 to 118 (MHRGGDRSTD…RGDHSDHDNR (118 aa)) are disordered. 2 stretches are compositionally biased toward gly residues: residues 52–70 (RGGG…GGGR) and 81–98 (SGGG…GEPG). A compositionally biased stretch (basic and acidic residues) spans 109 to 118 (RGDHSDHDNR). RRM domains lie at 122–203 (VKLF…YADG) and 213–293 (HKLF…FADP). 2 disordered regions span residues 292-414 (DPKR…GHHL) and 566-594 (QQSN…AIIP). The span at 301 to 311 (SRGGPAFGGPG) shows a compositional bias: gly residues. Over residues 342-358 (HPSSPRSAPHQFNNFGS) the composition is skewed to polar residues. A compositionally biased stretch (low complexity) spans 368-377 (TVTSTTDTAT). 2 stretches are compositionally biased toward polar residues: residues 383 to 401 (FSGN…SSHM) and 575 to 594 (PTQG…AIIP). The WW domain maps to 609 to 642 (VPLTCNWTEHTSPEGFKYYYNSITRESKWDKPEE). A disordered region spans residues 670–738 (MQQLQSPPQA…QSAQERAWKS (69 aa)). Residues 683–706 (PAMQPVQQIPQAQQGQQQMQMKQQ) are compositionally biased toward low complexity. The span at 723-732 (RIQQGIQSAQ) shows a compositional bias: polar residues.

Interacts with FY. Binds to SF1, FIK, RPRD1B, Os09g0509000/LOC_Os09g33480 and MADS8. In terms of tissue distribution, mostly expressed in young flowers (panicles) and stems, and also present in young seedlings leaves and roots.

The protein localises to the nucleus. Its function is as follows. Plays a major role in the promotion of the transition of the vegetative meristem to reproductive development. Required for RNA-mediated chromatin silencing of a range of loci in the genome. Cotranscriptionally recognizes aberrant RNA and marks it for silencing. Controls alternative cleavage and polyadenylation on pre-mRNAs and antisense RNAs. Regulates flowering time, seed size and cell volume, probably via the modulation of cell size. This is Flowering time control protein FCA from Oryza sativa subsp. japonica (Rice).